A 115-amino-acid polypeptide reads, in one-letter code: Ribosome-binding factor A (115 aa).

Belongs to the RbfA family. As to quaternary structure, monomer. Binds 30S ribosomal subunits, but not 50S ribosomal subunits or 70S ribosomes.

It localises to the cytoplasm. Its function is as follows. One of several proteins that assist in the late maturation steps of the functional core of the 30S ribosomal subunit. Associates with free 30S ribosomal subunits (but not with 30S subunits that are part of 70S ribosomes or polysomes). Required for efficient processing of 16S rRNA. May interact with the 5'-terminal helix region of 16S rRNA. In Bacillus velezensis (strain DSM 23117 / BGSC 10A6 / LMG 26770 / FZB42) (Bacillus amyloliquefaciens subsp. plantarum), this protein is Ribosome-binding factor A.